The following is a 366-amino-acid chain: Histidinol-phosphate aminotransferase (366 aa).

Lys-226 is subject to N6-(pyridoxal phosphate)lysine.

Belongs to the class-II pyridoxal-phosphate-dependent aminotransferase family. Histidinol-phosphate aminotransferase subfamily. Pyridoxal 5'-phosphate is required as a cofactor.

The catalysed reaction is L-histidinol phosphate + 2-oxoglutarate = 3-(imidazol-4-yl)-2-oxopropyl phosphate + L-glutamate. The protein operates within amino-acid biosynthesis; L-histidine biosynthesis; L-histidine from 5-phospho-alpha-D-ribose 1-diphosphate: step 7/9. In Methanosarcina barkeri (strain Fusaro / DSM 804), this protein is Histidinol-phosphate aminotransferase.